Consider the following 239-residue polypeptide: Small ribosomal subunit protein uS2 (239 aa).

Belongs to the universal ribosomal protein uS2 family.

The sequence is that of Small ribosomal subunit protein uS2 from Francisella tularensis subsp. tularensis (strain FSC 198).